The chain runs to 401 residues: Ribosomal RNA large subunit methyltransferase G (401 aa).

The protein belongs to the methyltransferase superfamily. RlmG family.

The protein resides in the cytoplasm. The catalysed reaction is guanosine(1835) in 23S rRNA + S-adenosyl-L-methionine = N(2)-methylguanosine(1835) in 23S rRNA + S-adenosyl-L-homocysteine + H(+). Its function is as follows. Specifically methylates the guanine in position 1835 (m2G1835) of 23S rRNA. The polypeptide is Ribosomal RNA large subunit methyltransferase G (Shewanella loihica (strain ATCC BAA-1088 / PV-4)).